Consider the following 509-residue polypeptide: Coiled-coil domain-containing protein 181 (509 aa).

2 disordered regions span residues 27–122 (INDK…EDEE) and 287–368 (LAQV…NEKK). Composition is skewed to basic and acidic residues over residues 41-58 (ACKK…KETE) and 67-82 (DPDK…RRND). The span at 319 to 333 (RIQSAGVSPVTSTYC) shows a compositional bias: polar residues. Coiled-coil stretches lie at residues 335–377 (SPRQ…VFKA) and 418–488 (LKKK…RSKQ). A compositionally biased stretch (basic and acidic residues) spans 337–368 (RQKELQKQLERKRERLKREEEQRKLEEENEKK).

It belongs to the CCDC181 family. As to quaternary structure, homodimer. Interacts with HOOK1. Interacts with HOOK2. Interacts with HOOK3.

It localises to the cytoplasm. The protein localises to the cytoskeleton. It is found in the cell projection. The protein resides in the cilium. Its subcellular location is the flagellum. Microtubule-binding protein that localizes to the microtubular manchette of elongating spermatids. This chain is Coiled-coil domain-containing protein 181, found in Rattus norvegicus (Rat).